The chain runs to 606 residues: Double-stranded RNA-binding protein Staufen homolog 2 (606 aa).

2 DRBM domains span residues 8 to 75 (TPMC…ESSL) and 95 to 181 (TPTV…ALKN). 2 disordered regions span residues 57 to 97 (SIKK…ITPT) and 177 to 205 (QALKNEPIPERPPQCSEEKKETEENSDAS). A compositionally biased stretch (polar residues) spans 85–97 (ADSNSNPGSITPT). Over residues 192-205 (SEEKKETEENSDAS) the composition is skewed to basic and acidic residues. 3 consecutive DRBM domains span residues 207 to 274 (SEIS…ELKK), 307 to 375 (NPIS…QLGY), and 493 to 557 (QPSQ…QLSE). Residues 580–606 (RLAERTESKPTNSGTTAQDCKDSKAVV) are disordered. Residues 588 to 597 (KPTNSGTTAQ) are compositionally biased toward polar residues.

Its function is as follows. RNA-binding protein required for the microtubule-dependent transport of RNAs within polarized cell types. In Danio rerio (Zebrafish), this protein is Double-stranded RNA-binding protein Staufen homolog 2 (stau2).